The primary structure comprises 175 residues: Apoptosis regulator Bcl-2 homolog (175 aa).

A mediates interaction with human NOP53 and localization to host nucleolus region spans residues 37 to 42; it reads KLYITG. The chain crosses the membrane as a helical span at residues 153 to 173; the sequence is MTALLGSIALLATILAAVAMS.

Belongs to the Bcl-2 family. Interacts with human NOP53; may sequester ORF16 in host nucleolus and reduce its antiapoptotic activity. Interacts with ORF55.

The protein resides in the host membrane. The protein localises to the host mitochondrion. Its subcellular location is the host nucleus. It localises to the host nucleolus. Plays a role in the protection against apoptosis mediated by cytotoxic cells during the immune response to acute and persistent viral infection. Contributes therefore to latency establishment. Also plays a role in the inhibition of host starvation-induced autophagy which ultimately contributes to the viral chronic infection. Also participates in the viral genome replication within host nucleus. This Homo sapiens (Human) protein is Apoptosis regulator Bcl-2 homolog (vBCL2).